A 68-amino-acid chain; its full sequence is Kasstasin (68 aa).

An N-terminal signal peptide occupies residues 1 to 20; that stretch reads MMKKSMLLLFFLGMVSFSLA. The propeptide occupies 21 to 44; the sequence is DDKREDEGEEKRADEGEEKRAAEE. The interval 22–41 is disordered; sequence DKREDEGEEKRADEGEEKRA. Lys67 is subject to Lysine amide.

It belongs to the frog skin active peptide (FSAP) family. Brevinin subfamily. As to expression, expressed by the skin dorsal glands.

The protein resides in the secreted. Peptide with potent vasoconstrictor properties (EC50=25 pM). Has moderate antimicrobial activity against Gram-positive bacterium S.aureus (MIC=55 uM) and against Gram-negative bacterium E.coli (MIC=110 uM). Not active against fungus C.albicans. Has weak hemolytic activity against horse erythrocytes. This chain is Kasstasin, found in Phlyctimantis maculatus (Red-legged running frog).